We begin with the raw amino-acid sequence, 140 residues long: Endoribonuclease YbeY (140 aa).

Zn(2+)-binding residues include H100, H104, and H110.

Belongs to the endoribonuclease YbeY family. Requires Zn(2+) as cofactor.

Its subcellular location is the cytoplasm. Its function is as follows. Single strand-specific metallo-endoribonuclease involved in late-stage 70S ribosome quality control and in maturation of the 3' terminus of the 16S rRNA. This chain is Endoribonuclease YbeY, found in Helicobacter pylori (strain Shi470).